The sequence spans 252 residues: Small ribosomal subunit protein uS2 (252 aa).

Belongs to the universal ribosomal protein uS2 family.

This Ruminiclostridium cellulolyticum (strain ATCC 35319 / DSM 5812 / JCM 6584 / H10) (Clostridium cellulolyticum) protein is Small ribosomal subunit protein uS2.